Here is a 114-residue protein sequence, read N- to C-terminus: Transcription initiation factor IIB (114 aa).

A run of 2 repeats spans residues 1–17 (VEQK…AQEL) and 28–109 (QYVP…EQIE).

The protein belongs to the TFIIB family.

In terms of biological role, stabilizes TBP binding to an archaeal box-A promoter. Also responsible for recruiting RNA polymerase II to the pre-initiation complex (DNA-TBP-TFIIB). In Haloarcula vallismortis (Halobacterium vallismortis), this protein is Transcription initiation factor IIB (tfb).